A 615-amino-acid chain; its full sequence is Sodium-dependent noradrenaline transporter (615 aa).

Residues 1-28 (MLLARMNPQVQPENGGAGPGSEQPPRKR) are disordered. Residues 1-60 (MLLARMNPQVQPENGGAGPGSEQPPRKRKEVLVVKERNGVQCLLASRDGDEQPRETWGKK) lie on the Cytoplasmic side of the membrane. A helical membrane pass occupies residues 61–86 (IDFLLSVVGFAVDLANVWRFPYLCYK). Positions 69, 71, and 72 each coordinate Na(+). A (R)-noradrenaline-binding site is contributed by Asp73. Asp73 contacts dopamine. Asn76 serves as a coordination point for Na(+). (R)-noradrenaline is bound by residues Tyr85 and Lys86. Topologically, residues 87-90 (NGGG) are extracellular. The helical transmembrane segment at 91 to 114 (AFLIPYTLFLIIAGMPLFYMELAL) threads the bilayer. Topologically, residues 115-133 (GQYNREGAATVWKICPFFK) are cytoplasmic. Residues 134 to 164 (GVGYAVILIALYVGFYYNVIIAWSLYYLFSS) form a helical membrane-spanning segment. Residues Ala143 and Gly147 each coordinate (R)-noradrenaline. Dopamine is bound at residue Ala143. At 165–231 (FTPTLPWTDC…SSGIHDIGLP (67 aa)) the chain is on the extracellular side. Cys174 and Cys183 are disulfide-bonded. N-linked (GlcNAc...) asparagine glycosylation is found at Asn182, Asn190, and Asn196. A helical transmembrane segment spans residues 232-252 (QWQLLLCLIIVVIVLFFSLWK). Residues 253–255 (GVK) lie on the Cytoplasmic side of the membrane. Residues 256 to 280 (TSGKVVWITATLPYLVLFVLLVHGI) traverse the membrane as a helical segment. Residues 281-304 (TLPGASNGINAYLHIDFYRLKEAT) are Extracellular-facing. Residues 305-330 (VWIDAATQIFFSLGAGFGVLIAFASY) form a helical membrane-spanning segment. Phe315 serves as a coordination point for (R)-noradrenaline. Phe315 is a binding site for dopamine. Ser316 provides a ligand contact to Na(+). The Cytoplasmic segment spans residues 331-336 (NKFDNN). Residues 337 to 360 (CYRDALLTSTINCVTSFISGFAIF) traverse the membrane as a helical segment. Position 348 (Asn348) interacts with Na(+). At 361 to 400 (SILGYMAHEHKVNIEDVATEGAGLVFILYPEAISTLSGST) the chain is on the extracellular side. Glu380 is a (R)-noradrenaline binding site. Position 380 (Glu380) interacts with dopamine. Residues 401–426 (FWAIVFFIMLLALGIDSSMGGMEAVI) form a helical membrane-spanning segment. Na(+)-binding residues include Asp416 and Ser417. The Cytoplasmic segment spans residues 427 to 441 (TGLADDFQVLKRHRK). A helical transmembrane segment spans residues 442–462 (LFTFAVSFGTFLLALFCITKG). Gly463 is a topological domain (extracellular). Residues 464-490 (IYVLTLLDTFAAGTSILFAVLMEAIGV) traverse the membrane as a helical segment. Residues 491 to 520 (SWFYGVDRFSNDIQQMMGFKPGLYWRLCWK) lie on the Cytoplasmic side of the membrane. The chain crosses the membrane as a helical span at residues 521–543 (FVSPAFLLFVVIVSIINFKPLTY). The Extracellular portion of the chain corresponds to 544 to 546 (DDY). A helical membrane pass occupies residues 547-567 (IFPLWANWVGWGIAGSSMVLV). The Cytoplasmic portion of the chain corresponds to 568 to 615 (PAYIVYKFFSTRGSIRERLAYGITPASEHHLVAQRDIRQFQLQHWLAI).

The protein belongs to the sodium:neurotransmitter symporter (SNF) (TC 2.A.22) family. SLC6A2 subfamily. In terms of assembly, monomer. Can form homodimers in the cell membrane; homodimerization is mostly mediated by cholesterol and lipids, and regulates neurotransmitter transport activity. Interacts with PRKCABP. Palmitoylated. Palmitoylation regulates protein levels and neurotransmitter transport.

The protein localises to the cell membrane. It is found in the cell projection. Its subcellular location is the axon. The protein resides in the synapse. It localises to the synaptosome. It carries out the reaction (R)-noradrenaline(out) + chloride(out) + Na(+)(out) = (R)-noradrenaline(in) + chloride(in) + Na(+)(in). The catalysed reaction is dopamine(out) + chloride(out) + Na(+)(out) = dopamine(in) + chloride(in) + Na(+)(in). It catalyses the reaction dopamine(out) + chloride(out) + 2 Na(+)(out) = dopamine(in) + chloride(in) + 2 Na(+)(in). Inhibited by nisoxetine, oxaprotiline and desipramin. In terms of biological role, mediates sodium- and chloride-dependent transport of norepinephrine (also known as noradrenaline), the primary signaling neurotransmitter in the autonomic sympathetic nervous system. Is responsible for norepinephrine re-uptake and clearance from the synaptic cleft, thus playing a crucial role in norepinephrine inactivation and homeostasis. Can also mediate sodium- and chloride-dependent transport of dopamine. In Bos taurus (Bovine), this protein is Sodium-dependent noradrenaline transporter (SLC6A2).